Reading from the N-terminus, the 308-residue chain is UDP-3-O-acyl-N-acetylglucosamine deacetylase (308 aa).

His77, His233, and Asp237 together coordinate Zn(2+). Catalysis depends on His260, which acts as the Proton donor.

The protein belongs to the LpxC family. It depends on Zn(2+) as a cofactor.

It catalyses the reaction a UDP-3-O-[(3R)-3-hydroxyacyl]-N-acetyl-alpha-D-glucosamine + H2O = a UDP-3-O-[(3R)-3-hydroxyacyl]-alpha-D-glucosamine + acetate. It functions in the pathway glycolipid biosynthesis; lipid IV(A) biosynthesis; lipid IV(A) from (3R)-3-hydroxytetradecanoyl-[acyl-carrier-protein] and UDP-N-acetyl-alpha-D-glucosamine: step 2/6. In terms of biological role, catalyzes the hydrolysis of UDP-3-O-myristoyl-N-acetylglucosamine to form UDP-3-O-myristoylglucosamine and acetate, the committed step in lipid A biosynthesis. This Nitratidesulfovibrio vulgaris (strain ATCC 29579 / DSM 644 / CCUG 34227 / NCIMB 8303 / VKM B-1760 / Hildenborough) (Desulfovibrio vulgaris) protein is UDP-3-O-acyl-N-acetylglucosamine deacetylase.